The primary structure comprises 365 residues: 1-aminocyclopropane-1-carboxylate oxidase homolog 9 (365 aa).

The Fe2OG dioxygenase domain maps to K214–S313. H238, D240, and H294 together coordinate Fe cation. Residue R304 coordinates 2-oxoglutarate.

The protein belongs to the iron/ascorbate-dependent oxidoreductase family. It depends on Fe(2+) as a cofactor.

This is 1-aminocyclopropane-1-carboxylate oxidase homolog 9 from Arabidopsis thaliana (Mouse-ear cress).